Reading from the N-terminus, the 115-residue chain is Promotilin (115 aa).

The signal sequence occupies residues 1–25; sequence MLSRKATAVLLAVHAAAMLASQTEA. The interval 43-72 is disordered; that stretch reads RYKGQKKSLSVQQRSEEVGPVDPTEPWEEK.

Belongs to the motilin family.

It localises to the secreted. Its function is as follows. Plays an important role in the regulation of interdigestive gastrointestinal motility and indirectly causes rhythmic contraction of duodenal and colonic smooth muscle. The protein is Promotilin (MLN) of Bos taurus (Bovine).